Consider the following 104-residue polypeptide: L-rhamnose mutarotase (104 aa).

Tyr18 is a substrate binding site. Residue His22 is the Proton donor of the active site. Substrate-binding positions include Tyr41 and 76–77; that span reads WW.

This sequence belongs to the rhamnose mutarotase family. As to quaternary structure, homodimer.

The protein localises to the cytoplasm. It catalyses the reaction alpha-L-rhamnose = beta-L-rhamnose. The protein operates within carbohydrate metabolism; L-rhamnose metabolism. Functionally, involved in the anomeric conversion of L-rhamnose. The polypeptide is L-rhamnose mutarotase (Opitutus terrae (strain DSM 11246 / JCM 15787 / PB90-1)).